The primary structure comprises 256 residues: Nuclear shuttle protein (256 aa).

Positions 21 to 42 match the Bipartite nuclear localization signal motif; that stretch reads NYGFKRTFVVKRGDAKRRQTQV. Positions 81–96 match the Nuclear localization signal motif; sequence QLCKTQPNRSRSYIKL. Positions 150–187 are interaction with Arabidopsis thaliana NSI protein; that stretch reads ELFGARIHSLGNLAVTPALKERFYILHVLKRVISVEKD.

The protein belongs to the begomovirus nuclear shuttle protein family. Binds to single-stranded and double-stranded viral DNA. Interacts with the host nuclear shuttle interacting (NSI) protein. This interaction may allow NSP to recruit NSI monomers to the viral genome and thus regulate nuclear export of viral genome by NSP.

It localises to the host nucleus. The protein resides in the host cytoplasm. The protein localises to the host cell membrane. Functionally, binds to the genomic viral ssDNA, shuttles it into and out of the cell nucleus. Begomoviruses use 2 proteins to transport their DNA from cell to cell. The nuclear shuttle protein (NSP) shuttles it between nucleus and cytoplasm and the movement protein (MP) probably transports the DNA-NSP complex to the cell periphery and facilitates movement across the cell wall. The protein is Nuclear shuttle protein of Pepper huasteco yellow vein virus (PHYVV).